Reading from the N-terminus, the 253-residue chain is Sulfate transporter CysZ (253 aa).

A run of 4 helical transmembrane segments spans residues 31-51, 75-95, 151-171, and 222-242; these read FVIL…WWLF, LLWP…FSTI, IVLL…PVLW, and IPLL…AMWV.

This sequence belongs to the CysZ family.

Its subcellular location is the cell inner membrane. Its function is as follows. High affinity, high specificity proton-dependent sulfate transporter, which mediates sulfate uptake. Provides the sulfur source for the cysteine synthesis pathway. This Shigella flexneri serotype 5b (strain 8401) protein is Sulfate transporter CysZ.